Consider the following 198-residue polypeptide: Ras-related protein RabH (198 aa).

14-21 (GDWNVGKS) lines the GTP pocket. Positions 36–44 (TKLSMGEHF) match the Effector region motif. Residues 62–66 (DTSGM) and 120–123 (SKFD) contribute to the GTP site. Cys-195 carries the post-translational modification Cysteine methyl ester. The S-geranylgeranyl cysteine moiety is linked to residue Cys-195. A propeptide spans 196-198 (SIN) (removed in mature form).

This sequence belongs to the small GTPase superfamily. Rab family.

It localises to the cell membrane. This chain is Ras-related protein RabH (rabH), found in Dictyostelium discoideum (Social amoeba).